Reading from the N-terminus, the 156-residue chain is ATP synthase subunit b (156 aa).

The helical transmembrane segment at 5 to 25 (LTMIGQAIAFFIFVVFCMKYV) threads the bilayer.

The protein belongs to the ATPase B chain family. F-type ATPases have 2 components, F(1) - the catalytic core - and F(0) - the membrane proton channel. F(1) has five subunits: alpha(3), beta(3), gamma(1), delta(1), epsilon(1). F(0) has three main subunits: a(1), b(2) and c(10-14). The alpha and beta chains form an alternating ring which encloses part of the gamma chain. F(1) is attached to F(0) by a central stalk formed by the gamma and epsilon chains, while a peripheral stalk is formed by the delta and b chains.

The protein localises to the cell inner membrane. Its function is as follows. F(1)F(0) ATP synthase produces ATP from ADP in the presence of a proton or sodium gradient. F-type ATPases consist of two structural domains, F(1) containing the extramembraneous catalytic core and F(0) containing the membrane proton channel, linked together by a central stalk and a peripheral stalk. During catalysis, ATP synthesis in the catalytic domain of F(1) is coupled via a rotary mechanism of the central stalk subunits to proton translocation. In terms of biological role, component of the F(0) channel, it forms part of the peripheral stalk, linking F(1) to F(0). This is ATP synthase subunit b from Hahella chejuensis (strain KCTC 2396).